A 433-amino-acid polypeptide reads, in one-letter code: Serine--tRNA ligase (433 aa).

235–237 is an L-serine binding site; the sequence is TSE. 266-268 is a binding site for ATP; sequence RSE. Glu289 provides a ligand contact to L-serine. Residue 353 to 356 coordinates ATP; sequence EISS. Ser388 contacts L-serine.

This sequence belongs to the class-II aminoacyl-tRNA synthetase family. Type-1 seryl-tRNA synthetase subfamily. In terms of assembly, homodimer. The tRNA molecule binds across the dimer.

It localises to the cytoplasm. It catalyses the reaction tRNA(Ser) + L-serine + ATP = L-seryl-tRNA(Ser) + AMP + diphosphate + H(+). The enzyme catalyses tRNA(Sec) + L-serine + ATP = L-seryl-tRNA(Sec) + AMP + diphosphate + H(+). The protein operates within aminoacyl-tRNA biosynthesis; selenocysteinyl-tRNA(Sec) biosynthesis; L-seryl-tRNA(Sec) from L-serine and tRNA(Sec): step 1/1. Catalyzes the attachment of serine to tRNA(Ser). Is also able to aminoacylate tRNA(Sec) with serine, to form the misacylated tRNA L-seryl-tRNA(Sec), which will be further converted into selenocysteinyl-tRNA(Sec). The chain is Serine--tRNA ligase from Burkholderia cepacia (Pseudomonas cepacia).